Here is a 628-residue protein sequence, read N- to C-terminus: Kinesin-like protein tea2 (628 aa).

Positions 2-122 are interaction with mal3; that stretch reads SSSSSKPVNT…TTSQQTNSKG (121 aa). Position 82 is a phosphoserine (serine 82). In terms of domain architecture, Kinesin motor spans 132–460; that stretch reads GIITSIRIRP…LKFASRAQNL (329 aa). An ATP-binding site is contributed by 218-225; sequence GMTGTGKT. The stretch at 530–557 forms a coiled coil; sequence LRMEELLSDHNFEIADLRDELQDKEQII. The segment at 588–628 is disordered; it reads VTRGSRSSSDQFSNETKTEILPDDQQQSKKDSVTQETQLLS. Positions 589 to 602 are enriched in polar residues; that stretch reads TRGSRSSSDQFSNE. The span at 603–620 shows a compositional bias: basic and acidic residues; the sequence is TKTEILPDDQQQSKKDSV.

It belongs to the TRAFAC class myosin-kinesin ATPase superfamily. Kinesin family. As to quaternary structure, interacts with mal3 and tip1.

It is found in the cytoplasm. The protein localises to the cytoskeleton. Functionally, promotes microtubule growth, possibly through interactions with the microtubule end, and is important for establishing and maintaining polarized growth along the long axis of the cell. Acts as a kinesin motor protein that moves along microtubules and is required for proper localization of tea1 and tip1 to the cell tips and microtubules, respectively. ATPase activity stimulated via interaction with mal3. The polypeptide is Kinesin-like protein tea2 (Schizosaccharomyces pombe (strain 972 / ATCC 24843) (Fission yeast)).